Consider the following 156-residue polypeptide: Small ribosomal subunit protein uS7 (156 aa).

This sequence belongs to the universal ribosomal protein uS7 family. Part of the 30S ribosomal subunit. Contacts proteins S9 and S11.

Its function is as follows. One of the primary rRNA binding proteins, it binds directly to 16S rRNA where it nucleates assembly of the head domain of the 30S subunit. Is located at the subunit interface close to the decoding center, probably blocks exit of the E-site tRNA. The chain is Small ribosomal subunit protein uS7 from Ralstonia nicotianae (strain ATCC BAA-1114 / GMI1000) (Ralstonia solanacearum).